Consider the following 198-residue polypeptide: Protein RD3-like (198 aa).

Residues 28-57 are a coiled coil; it reads KTLLRELKWHLKERERLIQEIENEQKVKKT. The tract at residues 133–168 is disordered; that stretch reads GSEQEDLEDSGSMDCSAPSVIQGDSSKRADKDEIPT. The span at 157-166 shows a compositional bias: basic and acidic residues; it reads SSKRADKDEI.

This chain is Protein RD3-like (RD3L), found in Homo sapiens (Human).